The following is a 498-amino-acid chain: MASQGTKRSYEQMETDGERQNATEIRASVGKMIGGIGRFYIQMCTELKLSDYEGRLIQNSLTIERMVLSAFDERRNKYLEEHPSAGKDPKKTGGPIYRRVNGKWMRELILYDKEEIRRIWRQANNGDDATAGLTHMMIWHSNLNDATYQRTRALVRTGMDPRMCSLMQGSTLPRRSGAAGAAVKGVGTMVMELVRMIKRGINDRNFWRGENGRKTRIAYERMCNILKGKFQTAAQKAMMDQVRESRNPGNAEFEDLTFLARSALILRGSVAHKSCLPACVYGPAVASGYDFEREGYSLVGIDPFRLLQNSQVYSLIRPNENPAHKSQLVWMACHSAAFEDLRVLSFIKGTKVLPRGKLSTRGVQIASNENMETMESSTLELRSRYWAIRTRSGGNTNQQRASAGQISIQPTFSVQRNLPFDRTTIMAAFNGNTEGRTSDMRTEIIRMMESARPEDVSFQGRGVFELSDEKAASPIVPSFDMSNEGSYFFGDNAEEYDN.

The Unconventional nuclear localization signal motif lies at 1 to 18 (MASQGTKRSYEQMETDGE). The interval 1–21 (MASQGTKRSYEQMETDGERQN) is disordered. The span at 8–21 (RSYEQMETDGERQN) shows a compositional bias: basic and acidic residues. The Bipartite nuclear localization signal motif lies at 198–216 (KRGINDRNFWRGENGRKTR).

This sequence belongs to the influenza viruses nucleoprotein family. As to quaternary structure, homomultimerizes to form the nucleocapsid. May bind host exportin-1/XPO1. Binds to viral genomic RNA. Protein-RNA contacts are mediated by a combination of electrostatic interactions between positively charged residues and the phosphate backbone and planar interactions between aromatic side chains and bases. Post-translationally, late in virus-infected cells, may be cleaved from a 56-kDa protein to a 53-kDa protein by a cellular caspase. This cleavage might be a marker for the onset of apoptosis in infected cells or have a specific function in virus host interaction.

The protein localises to the virion. It localises to the host nucleus. In terms of biological role, encapsidates the negative strand viral RNA, protecting it from nucleases. The encapsidated genomic RNA is termed the ribonucleoprotein (RNP) and serves as template for transcription and replication. The RNP needs to be localized in the host nucleus to start an infectious cycle, but is too large to diffuse through the nuclear pore complex. NP comprises at least 2 nuclear localization signals that are responsible for the active RNP import into the nucleus through cellular importin alpha/beta pathway. Later in the infection, nclear export of RNPs are mediated through viral proteins NEP interacting with M1 which binds nucleoproteins. It is possible that nucleoprotein binds directly host exportin-1/XPO1 and plays an active role in RNPs nuclear export. M1 interaction with RNP seems to hide nucleoprotein's nuclear localization signals. Soon after a virion infects a new cell, M1 dissociates from the RNP under acidification of the virion driven by M2 protein. Dissociation of M1 from RNP unmasks nucleoprotein's nuclear localization signals, targeting the RNP to the nucleus. The chain is Nucleoprotein from Aves (Human).